We begin with the raw amino-acid sequence, 270 residues long: Release factor glutamine methyltransferase (270 aa).

Residues 113 to 117 (GTGSG), Asp136, and Asn177 contribute to the S-adenosyl-L-methionine site. 177–180 (NPPY) serves as a coordination point for substrate.

The protein belongs to the protein N5-glutamine methyltransferase family. PrmC subfamily.

It catalyses the reaction L-glutaminyl-[peptide chain release factor] + S-adenosyl-L-methionine = N(5)-methyl-L-glutaminyl-[peptide chain release factor] + S-adenosyl-L-homocysteine + H(+). In terms of biological role, methylates the class 1 translation termination release factors RF1/PrfA and RF2/PrfB on the glutamine residue of the universally conserved GGQ motif. This is Release factor glutamine methyltransferase from Lactococcus lactis subsp. lactis (strain IL1403) (Streptococcus lactis).